We begin with the raw amino-acid sequence, 258 residues long: tRNA pseudouridine synthase A (258 aa).

Catalysis depends on aspartate 61, which acts as the Nucleophile. Tyrosine 119 contributes to the substrate binding site.

It belongs to the tRNA pseudouridine synthase TruA family. In terms of assembly, homodimer.

It carries out the reaction uridine(38/39/40) in tRNA = pseudouridine(38/39/40) in tRNA. In terms of biological role, formation of pseudouridine at positions 38, 39 and 40 in the anticodon stem and loop of transfer RNAs. The chain is tRNA pseudouridine synthase A from Chlorobium phaeobacteroides (strain DSM 266 / SMG 266 / 2430).